A 426-amino-acid chain; its full sequence is MDTIAIPALNRPVDATVEIPGSKSITNRALLVAALAQGDSTLENALFSEDSEYFAKCVEQLGIPITLNPHLAQIQVSGKGGDIPAKQADLFVGLAGTAARFITALVALGNGEYRLDGVPRMRERPMGDLVTVLQNSGIKINFEGNSGFMPYTIYGQQFAGGHFRLKANQTSQQLSALLMIAPYAQQDTTIEVEGTLVSQSYVKMTCRLMADFGVDVTQTDDNQFHIKAGQRYQARHYTIEPDASNASYFFAAAAVTGGRVRVNHLTKQSCQGDILWLNVLEQMGCQVLEGEDYTEVIGPEQLQGIDVDMNDMSDLVQTLGAIAPYANSPVIIRNVEHIRYKETERIRAVVTELRRLGVKVEEFADGMKIEPTPINPAAIETYHDHRMAMAFAVTGLKTPGIVIQDPGCTAKTFPDYFTRFFKMIGQ.

3-phosphoshikimate is bound by residues Lys-23, Ser-24, and Arg-28. Phosphoenolpyruvate is bound at residue Lys-23. The phosphoenolpyruvate site is built by Gly-96 and Arg-124. Positions 170, 171, 172, 198, 314, and 341 each coordinate 3-phosphoshikimate. Gln-172 contacts phosphoenolpyruvate. Catalysis depends on Asp-314, which acts as the Proton acceptor. 3 residues coordinate phosphoenolpyruvate: Arg-345, Arg-386, and Lys-411.

The protein belongs to the EPSP synthase family. In terms of assembly, monomer.

It is found in the cytoplasm. It catalyses the reaction 3-phosphoshikimate + phosphoenolpyruvate = 5-O-(1-carboxyvinyl)-3-phosphoshikimate + phosphate. It participates in metabolic intermediate biosynthesis; chorismate biosynthesis; chorismate from D-erythrose 4-phosphate and phosphoenolpyruvate: step 6/7. Catalyzes the transfer of the enolpyruvyl moiety of phosphoenolpyruvate (PEP) to the 5-hydroxyl of shikimate-3-phosphate (S3P) to produce enolpyruvyl shikimate-3-phosphate and inorganic phosphate. The chain is 3-phosphoshikimate 1-carboxyvinyltransferase from Trichormus variabilis (strain ATCC 29413 / PCC 7937) (Anabaena variabilis).